The primary structure comprises 371 residues: Peptide chain release factor 2 (371 aa).

Q253 carries the post-translational modification N5-methylglutamine.

This sequence belongs to the prokaryotic/mitochondrial release factor family. In terms of processing, methylated by PrmC. Methylation increases the termination efficiency of RF2.

The protein localises to the cytoplasm. Peptide chain release factor 2 directs the termination of translation in response to the peptide chain termination codons UGA and UAA. The polypeptide is Peptide chain release factor 2 (Mycobacterium ulcerans (strain Agy99)).